The primary structure comprises 143 residues: WW domain-containing protein C660.05 (143 aa).

The WW domain occupies 9 to 44 (GLPAGWVAQWDPTYQAYFYINETFEGAQPQWEPPIP). The segment at 115–143 (HHGPLHGPHGGFGGRGGGRMGGRGGRGRR) is disordered.

This is WW domain-containing protein C660.05 from Schizosaccharomyces pombe (strain 972 / ATCC 24843) (Fission yeast).